Reading from the N-terminus, the 35-residue chain is Photosystem II reaction center protein M (35 aa).

The chain crosses the membrane as a helical span at residues 5–25; that stretch reads ILAFVATALFILIPTAFLLIL.

This sequence belongs to the PsbM family. PSII is composed of 1 copy each of membrane proteins PsbA, PsbB, PsbC, PsbD, PsbE, PsbF, PsbH, PsbI, PsbJ, PsbK, PsbL, PsbM, PsbT, PsbX, PsbY, PsbZ, Psb30/Ycf12, at least 3 peripheral proteins of the oxygen-evolving complex and a large number of cofactors. It forms dimeric complexes.

It is found in the plastid. The protein localises to the chloroplast thylakoid membrane. In terms of biological role, one of the components of the core complex of photosystem II (PSII). PSII is a light-driven water:plastoquinone oxidoreductase that uses light energy to abstract electrons from H(2)O, generating O(2) and a proton gradient subsequently used for ATP formation. It consists of a core antenna complex that captures photons, and an electron transfer chain that converts photonic excitation into a charge separation. This subunit is found at the monomer-monomer interface. The chain is Photosystem II reaction center protein M from Adiantum capillus-veneris (Maidenhair fern).